Consider the following 566-residue polypeptide: E3 ubiquitin-protein ligase RNF220 (566 aa).

Residue Lys-277 forms a Glycyl lysine isopeptide (Lys-Gly) (interchain with G-Cter in SUMO2) linkage. Residues 277-297 (KREGESPTASPHSSATDDLHH) form a disordered region. Residue Ser-390 is modified to Phosphoserine. A coiled-coil region spans residues 485-513 (EDSAVTTFEALKARVRELERQLSRGDRYK). Residues 514–522 (CLICMDSYS) form a required for targeting to the cytoplasm region. The RING-type zinc finger occupies 514–553 (CLICMDSYSMPLTSIQCWHVHCEECWLRTLGAKKLCPQCN).

In terms of assembly, interacts with SIN3B. Interacts with CTNNB1 (via Armadillo repeats 2-8). Interacts with USP7 (via MATH domain). In terms of processing, auto-ubiquitinated; leads to proteasomal degradation. Ubiquitously expressed. Abundant in brain and spinal cord, particularly in the cerebellum and cerebral cortex. In fetal tissues expressed in the cerebellum, spinal cord and cortex.

It is found in the cytoplasm. It localises to the nucleus. The catalysed reaction is S-ubiquitinyl-[E2 ubiquitin-conjugating enzyme]-L-cysteine + [acceptor protein]-L-lysine = [E2 ubiquitin-conjugating enzyme]-L-cysteine + N(6)-ubiquitinyl-[acceptor protein]-L-lysine.. Its pathway is protein modification; protein ubiquitination. Its function is as follows. E3 ubiquitin-protein ligase that promotes the ubiquitination and proteasomal degradation of SIN3B. Independently of its E3 ligase activity, acts as a CTNNB1 stabilizer through USP7-mediated deubiquitination of CTNNB1 promoting Wnt signaling. Plays a critical role in the regulation of nuclear lamina. The polypeptide is E3 ubiquitin-protein ligase RNF220 (RNF220) (Homo sapiens (Human)).